A 151-amino-acid polypeptide reads, in one-letter code: MIKTPLPKQETLDQKWYVVDAADQRLGRLASEVAKVLRGKNKAEYTPHMDTGDFVIVVNAEKVVVTGRKPEQKLYRRHSGRPGGMKVETFNQLQDRIPERIIEKAVKGMLPKNALGRRLFTKLKVYAGTEHPHAAQQPEVLTINTIPGGDN.

It belongs to the universal ribosomal protein uL13 family. In terms of assembly, part of the 50S ribosomal subunit.

Its function is as follows. This protein is one of the early assembly proteins of the 50S ribosomal subunit, although it is not seen to bind rRNA by itself. It is important during the early stages of 50S assembly. The protein is Large ribosomal subunit protein uL13 of Picosynechococcus sp. (strain ATCC 27264 / PCC 7002 / PR-6) (Agmenellum quadruplicatum).